The following is a 366-amino-acid chain: Dihydroorotate dehydrogenase (quinone) (366 aa).

FMN is bound by residues 74–78 and Thr98; that span reads AGFDK. Residue Lys78 participates in substrate binding. 123–127 is a binding site for substrate; that stretch reads NRMGF. FMN is bound by residues Asn156 and Asn189. Asn189 is a binding site for substrate. The Nucleophile role is filled by Ser192. Asn194 provides a ligand contact to substrate. Positions 231 and 259 each coordinate FMN. 260 to 261 serves as a coordination point for substrate; the sequence is NT. Residues Gly285, Gly314, and 335 to 336 each bind FMN; that span reads YT.

The protein belongs to the dihydroorotate dehydrogenase family. Type 2 subfamily. As to quaternary structure, monomer. It depends on FMN as a cofactor.

It is found in the cell membrane. It carries out the reaction (S)-dihydroorotate + a quinone = orotate + a quinol. It functions in the pathway pyrimidine metabolism; UMP biosynthesis via de novo pathway; orotate from (S)-dihydroorotate (quinone route): step 1/1. Functionally, catalyzes the conversion of dihydroorotate to orotate with quinone as electron acceptor. This Kineococcus radiotolerans (strain ATCC BAA-149 / DSM 14245 / SRS30216) protein is Dihydroorotate dehydrogenase (quinone).